The chain runs to 649 residues: MGDKINFIFGIHNHQPLGNFGWVFEEAYEKCYWPFLETLEEYPNMKVAIHTSGPLIEWLQDNRPEYIDLLRSLVKRGQVEIVVAGFYEPVLASIPKEDRIEQIRLMKEWAKSIGFDARGVWLTERVWQPELVKTLKESGIDYVIVDDYHFMSAGLSKEELYWPYYTEDGGEVIAVFPIDEKLRYLIPFRPVDKVLEYLHSLIDGDESKVAVFHDDGEKFGIWPGTYEWVYEKGWLREFFDRISSDEKINLMLYTEYLEKYKPRGLVYLPIASYFEMSEWSLPAKQARLFVEFVNELKVKGIFEKYRVFVRGGIWKNFFYKYPESNYMHKRMLMVSKLVRNNPEARKYLLRAQCNDAYWHGLFGGVYLPHLRRAIWNNLIKANSYVSLGKVIRDIDYDGFEEVLIENDNFYAVFKPSYGGSLVEFSSKNRLVNYVDVLARRWEHYHGYVESQFDGVASIHELEKKIPDEIRKEVAYDKYRRFMLQDHVVPLGTTLEDFMFSRQQEIGEFPRVPYSYELLDGGIRLKREHLGIEVEKTVKLVNDGFEVEYIVNNKTGNPVLFAVELNVAVQSIMESPGVLRGKEIVVDDKYAVGKFALKFEDEMEVWKYPVKTLSQSESGWDLIQQGVSYIVPIRLEDKIRFKLKFEEASG.

The active-site Nucleophile is Glu124. Asp215 serves as the catalytic Proton donor.

This sequence belongs to the glycosyl hydrolase 57 family. As to quaternary structure, homodimer.

It catalyses the reaction Endohydrolysis of (1-&gt;4)-alpha-D-glucosidic linkages in polysaccharides containing three or more (1-&gt;4)-alpha-linked D-glucose units.. In terms of biological role, displays a broad range of substrate specificity, with the capacity to hydrolyze carbohydrates as simple as maltotriose. In Pyrococcus furiosus (strain ATCC 43587 / DSM 3638 / JCM 8422 / Vc1), this protein is Alpha-amylase (amyA).